Here is a 303-residue protein sequence, read N- to C-terminus: Flavin-dependent thymidylate synthase (303 aa).

In terms of domain architecture, ThyX spans 41 to 258 (GKVALVDTMP…PVACEAFIDY (218 aa)). Residues Ser95, 118–120 (RHR), and Glu126 contribute to the FAD site. DUMP-binding positions include 115–118 (QWIR), 126–130 (EYSAR), and Arg197. Positions 118–128 (RHRTANVNEYS) match the ThyX motif motif. FAD is bound by residues 213 to 215 (DLH) and His219. Residue Arg224 participates in dUMP binding. Residue Arg224 is the Involved in ionization of N3 of dUMP, leading to its activation of the active site.

It belongs to the thymidylate synthase ThyX family. In terms of assembly, homotetramer. Requires FAD as cofactor.

It catalyses the reaction dUMP + (6R)-5,10-methylene-5,6,7,8-tetrahydrofolate + NADPH + H(+) = dTMP + (6S)-5,6,7,8-tetrahydrofolate + NADP(+). It functions in the pathway pyrimidine metabolism; dTTP biosynthesis. In terms of biological role, catalyzes the reductive methylation of 2'-deoxyuridine-5'-monophosphate (dUMP) to 2'-deoxythymidine-5'-monophosphate (dTMP) while utilizing 5,10-methylenetetrahydrofolate (mTHF) as the methyl donor, and NADPH and FADH(2) as the reductant. This is Flavin-dependent thymidylate synthase (thyA) from Dictyostelium discoideum (Social amoeba).